Consider the following 152-residue polypeptide: UPF0178 protein YPTS_2857 (152 aa).

This sequence belongs to the UPF0178 family.

In Yersinia pseudotuberculosis serotype IB (strain PB1/+), this protein is UPF0178 protein YPTS_2857.